The primary structure comprises 65 residues: Large ribosomal subunit protein uL29 (65 aa).

This sequence belongs to the universal ribosomal protein uL29 family.

The polypeptide is Large ribosomal subunit protein uL29 (Dehalococcoides mccartyi (strain ATCC BAA-2266 / KCTC 15142 / 195) (Dehalococcoides ethenogenes (strain 195))).